The primary structure comprises 257 residues: Phosphate import ATP-binding protein PstB (257 aa).

The ABC transporter domain maps to 5 to 246 (LEIKDLTAFY…EVIFTSPKNE (242 aa)). 37 to 44 (GPSGCGKS) is a binding site for ATP.

This sequence belongs to the ABC transporter superfamily. Phosphate importer (TC 3.A.1.7) family. As to quaternary structure, the complex is composed of two ATP-binding proteins (PstB), two transmembrane proteins (PstC and PstA) and a solute-binding protein (PstS).

The protein resides in the cell membrane. The enzyme catalyses phosphate(out) + ATP + H2O = ADP + 2 phosphate(in) + H(+). Part of the ABC transporter complex PstSACB involved in phosphate import. Responsible for energy coupling to the transport system. The protein is Phosphate import ATP-binding protein PstB of Tropheryma whipplei (strain Twist) (Whipple's bacillus).